Consider the following 731-residue polypeptide: Replication restart protein PriA (731 aa).

The segment at 1–98 (MSVAHVALPV…HPIGDVLFHA (98 aa)) is 3'BD. The WH stretch occupies residues 115–177 (WYWFATEQGQ…RGKGLAELAC (63 aa)). Residues 200–375 (TEQATAVGAI…VRQGKYRQLT (176 aa)) are helicase lobe 1. In terms of domain architecture, Helicase ATP-binding spans 210–376 (HSAADRFSAW…RQGKYRQLTL (167 aa)). An ATP-binding site is contributed by 223 to 230 (GITGSGKT). ADP contacts are provided by Gly226, Gly228, Lys229, Thr230, Glu231, and Arg263. The short motif at 319–322 (DEEH) is the DEAH box element. An Aromatic-rich loop (ARL) motif is present at residues 326-340 (YKQQEGWRYHARDLA). Residues 387–430 (QQHVLDLKGQPLQAGLSPALISRMRQHLQADNQVILFLNRRGFA) form a helicase lobe 2, N-terminus region. Residues 431–485 (PALLCHDCGWIAECPRCDSYYTLHQAQHHLRCHHCDSQRPIPRQCPSCGSTHLVP) are CRR. Positions 435, 438, 444, 447, 462, 465, 475, and 478 each coordinate Zn(2+). Positions 470–637 (PIPRQCPSCG…QLPPWTSHVL (168 aa)) constitute a Helicase C-terminal domain. A helicase lobe 2, C-terminus region spans residues 486-626 (VGIGTEQLEQ…AEQALAERQT (141 aa)). Residue Lys543 coordinates ADP. Residues 633–731 (TSHVLIRAED…WVLDVDPIEG (99 aa)) are CTD.

The protein belongs to the helicase family. PriA subfamily. As to quaternary structure, binds SSB. Component of the replication restart primosome. Zn(2+) serves as cofactor.

It carries out the reaction Couples ATP hydrolysis with the unwinding of duplex DNA by translocating in the 3'-5' direction.. The catalysed reaction is ATP + H2O = ADP + phosphate + H(+). With respect to regulation, ATPase activity is stimulated by single-stranded binding protein (SSB). Its function is as follows. Initiates the restart of stalled replication forks, which reloads the replicative helicase on sites other than the origin of replication. Recognizes and binds to abandoned replication forks and remodels them to uncover a helicase loading site. Promotes assembly of the primosome at these replication forks. In terms of biological role, recognizes abandoned replication forks and remodels SSB on ssDNA to uncover a loading site for DnaB. Binds replication fork DNA, has DNA-dependent ATPase activity in the presence of replication fork DNA, restores normal cell growth and SOS induction to E.coli mutant pirA304. The polypeptide is Replication restart protein PriA (Klebsiella pneumoniae subsp. pneumoniae (strain ATCC 700721 / MGH 78578)).